A 1100-amino-acid polypeptide reads, in one-letter code: Guanylate cyclase 2G (1100 aa).

The signal sequence occupies residues 1–43 (MASRTRSESPLEPRLYAGAGSRADHPSLVLMLSVVMLVTCLEA). Residues 44 to 481 (AKLTVGFHAP…VAGMTVTVTA (438 aa)) lie on the Extracellular side of the membrane. N-linked (GlcNAc...) asparagine glycosylation is found at N55, N85, N94, N217, N225, N238, N418, N440, and N443. A helical transmembrane segment spans residues 482–502 (VIPTVTFLVLASAAAITGLML). Residues 503–1100 (WRLRGKVQSH…EEEAKVSEIL (598 aa)) lie on the Cytoplasmic side of the membrane. Positions 546-837 (SDTSTVKASA…EASPRGHVSI (292 aa)) constitute a Protein kinase domain. The Guanylate cyclase domain occupies 901–1031 (TIFFSDIVGF…DTVNMASRME (131 aa)).

The protein belongs to the adenylyl cyclase class-4/guanylyl cyclase family. Homooligomer. In vitro interacts with NPR1/GC-A. In terms of processing, N-glycosylated. Highly expressed in testis.

It is found in the cell membrane. It carries out the reaction GTP = 3',5'-cyclic GMP + diphosphate. The sequence is that of Guanylate cyclase 2G (Gucy2g) from Mus musculus (Mouse).